Here is a 119-residue protein sequence, read N- to C-terminus: uncharacterized protein (119 aa).

Residues 86 to 119 (KKQRMKMLTEQEEEEEEEEEEPPKPKKKVINRKK) are disordered. Positions 95 to 106 (EQEEEEEEEEEE) are enriched in acidic residues. The span at 110 to 119 (PKKKVINRKK) shows a compositional bias: basic residues.

This is an uncharacterized protein from Sputnik virophage.